Reading from the N-terminus, the 425-residue chain is GTPase Obg (425 aa).

An Obg domain is found at 1–158 (MFRDSAKIYV…YSLILEMKMI (158 aa)). One can recognise an OBG-type G domain in the interval 159–330 (ADVGLVGYPN…LLYAVSETLK (172 aa)). GTP-binding positions include 165–172 (GYPNVGKS), 190–194 (FTTLV), 212–215 (DIPG), 282–285 (NKMD), and 311–313 (SAA). Mg(2+)-binding residues include S172 and T192. The OCT domain occupies 348–425 (YKVQEEKPFE…IYDTEFDYTR (78 aa)).

This sequence belongs to the TRAFAC class OBG-HflX-like GTPase superfamily. OBG GTPase family. In terms of assembly, monomer. Mg(2+) is required as a cofactor.

The protein localises to the cytoplasm. In terms of biological role, an essential GTPase which binds GTP, GDP and possibly (p)ppGpp with moderate affinity, with high nucleotide exchange rates and a fairly low GTP hydrolysis rate. Plays a role in control of the cell cycle, stress response, ribosome biogenesis and in those bacteria that undergo differentiation, in morphogenesis control. The polypeptide is GTPase Obg (Ruminiclostridium cellulolyticum (strain ATCC 35319 / DSM 5812 / JCM 6584 / H10) (Clostridium cellulolyticum)).